The sequence spans 212 residues: Probable nicotinate-nucleotide adenylyltransferase (212 aa).

The protein belongs to the NadD family.

It carries out the reaction nicotinate beta-D-ribonucleotide + ATP + H(+) = deamido-NAD(+) + diphosphate. It functions in the pathway cofactor biosynthesis; NAD(+) biosynthesis; deamido-NAD(+) from nicotinate D-ribonucleotide: step 1/1. Its function is as follows. Catalyzes the reversible adenylation of nicotinate mononucleotide (NaMN) to nicotinic acid adenine dinucleotide (NaAD). The polypeptide is Probable nicotinate-nucleotide adenylyltransferase (Shewanella sp. (strain MR-7)).